We begin with the raw amino-acid sequence, 310 residues long: MNQINSEFGPDAGAKAPLVVALVGPTASGKTALALELAEHFQLEILNIDSRQLYREMDIGTAKPTAEQQQRVTHHLLDLRSPDQPITLQEFQQEATAAVSQVLKERGVAFLAGGSGLYLKALTQGLQPPAVPPQAELRRQLSSLGQANCHQLLQQADPQAAAKIAPADAVRTQRALEVLYSSGKPMSAQQSTNPPPWRVLELGLNPMELRSRIAQRTLQIYQEGLLEETRQLSQRYGPDLPMLQTIGYGEALEVLQGGLSEAQAIATTTRRTQQFAKRQRTWFRRQHSPHWLTGQDALSEAIRLIEAGLG.

ATP is bound at residue Gly24–Thr31. Thr26–Thr31 contacts substrate. An interaction with substrate tRNA region spans residues Asp49–Gln52.

It belongs to the IPP transferase family. As to quaternary structure, monomer. Mg(2+) is required as a cofactor.

The catalysed reaction is adenosine(37) in tRNA + dimethylallyl diphosphate = N(6)-dimethylallyladenosine(37) in tRNA + diphosphate. Catalyzes the transfer of a dimethylallyl group onto the adenine at position 37 in tRNAs that read codons beginning with uridine, leading to the formation of N6-(dimethylallyl)adenosine (i(6)A). The chain is tRNA dimethylallyltransferase from Synechococcus sp. (strain CC9311).